A 416-amino-acid chain; its full sequence is Enterobactin exporter EntS (416 aa).

The Cytoplasmic portion of the chain corresponds to 1–21 (MNKQSWLLNLSLLKTHPAFRA). A helical membrane pass occupies residues 22 to 42 (VFLARFISIVSLGLLGVAVPV). The Periplasmic segment spans residues 43–55 (QIQMMTHSTWQVG). A helical membrane pass occupies residues 56-76 (LSVTLTGGAMFVGLMVGGVLA). Residues 77–83 (DRYERKK) are Cytoplasmic-facing. A helical membrane pass occupies residues 84-104 (VILLARGTCGIGFIGLCLNAL). At 105-109 (LPEPS) the chain is on the periplasmic side. A helical transmembrane segment spans residues 110-130 (LLAIYLLGLWDGFFASLGVTA). At 131-156 (LLAATPALVGRENLMQAGAITMLTVR) the chain is on the cytoplasmic side. Residues 157-177 (LGSVISPMIGGLLLATGGVAW) form a helical membrane-spanning segment. Position 178 (asparagine 178) is a topological domain, periplasmic. Residues 179-199 (YGLAAAGTFITLLPLLSLPAL) form a helical membrane-spanning segment. The Cytoplasmic segment spans residues 200 to 218 (PPPPQPREHPLKSLLAGFR). A helical membrane pass occupies residues 219–239 (FLLASPLVGGIALLGGLLTMA). The Periplasmic portion of the chain corresponds to 240–256 (SAVRVLYPALADNWQMS). Residues 257–277 (AAQIGFLYAAIPLGAAIGALT) form a helical membrane-spanning segment. Topologically, residues 278–287 (SGKLAHSVRP) are cytoplasmic. The chain crosses the membrane as a helical span at residues 288-307 (GLLMLLSTLGAFLAISLFGL). The Periplasmic segment spans residues 308 to 313 (MPMWIL). A helical membrane pass occupies residues 314 to 336 (GVVCLALFGWLSAVSSLLQYTML). Residues 337–356 (QTQTPEAMLGRINGLWTAQN) lie on the Cytoplasmic side of the membrane. A helical membrane pass occupies residues 357-377 (VTGDAIGAALLGGLGAMMTPV). Residue alanine 378 is a topological domain, periplasmic. A helical membrane pass occupies residues 379–399 (SASASGFGLLIIGVLLLLVLV). The Cytoplasmic portion of the chain corresponds to 400–416 (ELRRFRQTPPQVTASDS).

It belongs to the major facilitator superfamily. EntS (TC 2.A.1.38) family.

The protein localises to the cell inner membrane. In terms of biological role, component of an export pathway for enterobactin. The chain is Enterobactin exporter EntS from Escherichia coli O45:K1 (strain S88 / ExPEC).